A 463-amino-acid polypeptide reads, in one-letter code: T-box transcription factor TBX1 (463 aa).

Disordered regions lie at residues 39 to 58 (SPSP…PCSA) and 75 to 103 (GASS…PVKK). Residues 75-97 (GASSSSCASSTPGSGSTGSSGSS) are compositionally biased toward low complexity. The T-box DNA-binding region spans 119–297 (LWDEFNQLGT…SNPFAKGFRD (179 aa)). Disordered regions lie at residues 320–354 (RSRN…PLHG) and 367–405 (SPSL…LHHH). Over residues 323 to 332 (NPVSSPPQNG) the composition is skewed to polar residues. Positions 333 to 347 (SDKDGDGRREYERDT) are enriched in basic and acidic residues. Positions 367–380 (SPSLPVPGGLVPLS) are enriched in low complexity. The short motif at 420–431 (KTRPAPYPLPSI) is the Nuclear localization signal element.

In terms of assembly, binds DNA as a dimer. Interacts with dscr6/ripply3.

The protein localises to the nucleus. Probable transcriptional regulator involved in developmental processes. Binds to the palindromic T site 5'-TTCACACCTAGGTGTGAA-3' DNA sequence. Induces pre-placodal ectoderm (PPE) gene expression in regions where RIPPLY3 is absent. Plays a role in the formation of the anteroposterior (AP) axis during embryonic development; required to establish the posterolateral border of the pre-placodal ectoderm (PPE) acting downstream of the retinoic acid receptor (RAR) signaling. The polypeptide is T-box transcription factor TBX1 (tbx1) (Xenopus tropicalis (Western clawed frog)).